The sequence spans 243 residues: Probable transcriptional regulatory protein Smal_3128 (243 aa).

Belongs to the TACO1 family.

Its subcellular location is the cytoplasm. The polypeptide is Probable transcriptional regulatory protein Smal_3128 (Stenotrophomonas maltophilia (strain R551-3)).